The following is a 2149-amino-acid chain: Oxygen-regulated protein 1 (2149 aa).

Over residues M1–Q20 the composition is skewed to polar residues. The interval M1 to R25 is disordered. The 83-residue stretch at K36 to D118 folds into the Doublecortin 1 domain. The segment at W127–P148 is disordered. Residues R152–D231 form the Doublecortin 2 domain. 3 disordered regions span residues V351 to S373, M1435 to R1456, and V1583 to L1613. Residues S1446 to R1456 are compositionally biased toward polar residues.

As to quaternary structure, interacts (via the doublecortin domains) with microtubules. Interacts with RP1L1. Interacts with MAK.

The protein resides in the cytoplasm. It localises to the cytoskeleton. Its subcellular location is the cilium axoneme. The protein localises to the cell projection. It is found in the cilium. The protein resides in the photoreceptor outer segment. Functionally, microtubule-associated protein regulating the stability and length of the microtubule-based axoneme of photoreceptors. Required for the differentiation of photoreceptor cells, it plays a role in the organization of the outer segment of rod and cone photoreceptors ensuring the correct orientation and higher-order stacking of outer segment disks along the photoreceptor axoneme. This Saimiri boliviensis boliviensis (Bolivian squirrel monkey) protein is Oxygen-regulated protein 1 (RP1).